The sequence spans 284 residues: Tropomyosin Lep s 1.0101 (284 aa).

Positions 1 to 273 form a coiled coil; it reads MEAIKKKMQA…KDRYRALADE (273 aa). A compositionally biased stretch (basic and acidic residues) spans 155–171; sequence AEDADGKSDEVSRKMAQ. The tract at residues 155–187 is disordered; sequence AEDADGKSDEVSRKMAQVEDDLEVAEDRVKSGD.

Belongs to the tropomyosin family. As to quaternary structure, homodimer.

Tropomyosin, in association with the troponin complex, plays a central role in the calcium dependent regulation of muscle contraction. The protein is Tropomyosin Lep s 1.0101 of Lepisma saccharinum (Silverfish).